The primary structure comprises 43 residues: Bacteriocin mundticin (43 aa).

Cysteines 9 and 14 form a disulfide.

Functionally, this bacteriocin inhibits the growth of several Gram-positive bacteria, especially pathogenic L.monocytogenes and C.botulinum but has no effect on the growth of a number of yeasts and Gram-negative bacteria. This Enterococcus mundtii protein is Bacteriocin mundticin.